The chain runs to 239 residues: Purine nucleoside phosphorylase DeoD-type (239 aa).

Histidine 5 lines the a purine D-ribonucleoside pocket. Phosphate-binding positions include glycine 21, arginine 25, arginine 44, and 88 to 91 (RVGS). Residues 180-182 (EME) and 204-205 (SD) contribute to the a purine D-ribonucleoside site. Aspartate 205 serves as the catalytic Proton donor.

This sequence belongs to the PNP/UDP phosphorylase family. Homohexamer; trimer of homodimers.

It catalyses the reaction a purine D-ribonucleoside + phosphate = a purine nucleobase + alpha-D-ribose 1-phosphate. The catalysed reaction is a purine 2'-deoxy-D-ribonucleoside + phosphate = a purine nucleobase + 2-deoxy-alpha-D-ribose 1-phosphate. Catalyzes the reversible phosphorolytic breakdown of the N-glycosidic bond in the beta-(deoxy)ribonucleoside molecules, with the formation of the corresponding free purine bases and pentose-1-phosphate. The chain is Purine nucleoside phosphorylase DeoD-type from Salmonella arizonae (strain ATCC BAA-731 / CDC346-86 / RSK2980).